The sequence spans 939 residues: AP-2 complex subunit alpha-2 (939 aa).

A 1,2-diacyl-sn-glycero-3-phospho-(1D-myo-inositol-3,4,5-trisphosphate) contacts are provided by residues R11–G12, K43, Y53, and K57–K61. The interval L612 to S681 is disordered. Positions P646–A667 are enriched in low complexity. A compositionally biased stretch (pro residues) spans P668–S677.

It belongs to the adaptor complexes large subunit family. As to quaternary structure, adaptor protein complex 2 (AP-2) is a heterotetramer composed of two large adaptins (alpha-type subunit AP2A1 or AP2A2 and beta-type subunit AP2B1), a medium adaptin (mu-type subunit AP2M1) and a small adaptin (sigma-type subunit AP2S1). Binds EPN1, EPS15, AMPH, SNAP91 and BIN1. Interacts with HIP1. Interacts with DGKD. Interacts with DENND1A, DENND1B and DENND1C. Interacts with FCHO1 and DAB2. Interacts with ATAT1; this interaction is required for efficient alpha-tubulin acetylation by ATAT1. Interacts with KIAA1107. Together with AP2B1 and AP2M1, it interacts with ADAM10; this interaction facilitates ADAM10 endocytosis from the plasma membrane during long-term potentiation in hippocampal neurons. Interacts with CLN3 (via dileucine motif). Interacts with ABCB11; this interaction regulates cell membrane expression of ABCB11 through its internalization in a clathrin-dependent manner and its subsequent degradation. Interacts with Cacfd1. Interacts with DNAJC6. In terms of tissue distribution, expressed in the brain (at protein level).

The protein localises to the cell membrane. It localises to the membrane. The protein resides in the coated pit. Component of the adaptor protein complex 2 (AP-2). Adaptor protein complexes function in protein transport via transport vesicles in different membrane traffic pathways. Adaptor protein complexes are vesicle coat components and appear to be involved in cargo selection and vesicle formation. AP-2 is involved in clathrin-dependent endocytosis in which cargo proteins are incorporated into vesicles surrounded by clathrin (clathrin-coated vesicles, CCVs) which are destined for fusion with the early endosome. The clathrin lattice serves as a mechanical scaffold but is itself unable to bind directly to membrane components. Clathrin-associated adaptor protein (AP) complexes which can bind directly to both the clathrin lattice and to the lipid and protein components of membranes are considered to be the major clathrin adaptors contributing the CCV formation. AP-2 also serves as a cargo receptor to selectively sort the membrane proteins involved in receptor-mediated endocytosis. AP-2 seems to play a role in the recycling of synaptic vesicle membranes from the presynaptic surface. AP-2 recognizes Y-X-X-[FILMV] (Y-X-X-Phi) and [ED]-X-X-X-L-[LI] endocytosis signal motifs within the cytosolic tails of transmembrane cargo molecules. AP-2 may also play a role in maintaining normal post-endocytic trafficking through the ARF6-regulated, non-clathrin pathway. During long-term potentiation in hippocampal neurons, AP-2 is responsible for the endocytosis of ADAM10. The AP-2 alpha subunit binds polyphosphoinositide-containing lipids, positioning AP-2 on the membrane. The AP-2 alpha subunit acts via its C-terminal appendage domain as a scaffolding platform for endocytic accessory proteins. The AP-2 alpha and AP-2 sigma subunits are thought to contribute to the recognition of the [ED]-X-X-X-L-[LI] motif. In Homo sapiens (Human), this protein is AP-2 complex subunit alpha-2 (AP2A2).